The sequence spans 491 residues: Cobyric acid synthase (491 aa).

Residues 250 to 439 form the GATase cobBQ-type domain; sequence ELNIIVIRLP…LHGIFDNGSW (190 aa). Cys-331 (nucleophile) is an active-site residue. The active site involves His-431.

The protein belongs to the CobB/CobQ family. CobQ subfamily.

The protein operates within cofactor biosynthesis; adenosylcobalamin biosynthesis. Catalyzes amidations at positions B, D, E, and G on adenosylcobyrinic A,C-diamide. NH(2) groups are provided by glutamine, and one molecule of ATP is hydrogenolyzed for each amidation. The chain is Cobyric acid synthase from Microcystis aeruginosa (strain NIES-843 / IAM M-2473).